The sequence spans 248 residues: Probable phosphatase VF_A0065 (248 aa).

The Zn(2+) site is built by histidine 8, histidine 10, histidine 16, histidine 41, glutamate 74, histidine 102, histidine 132, aspartate 194, and histidine 196.

Belongs to the PHP family. Requires Zn(2+) as cofactor.

The protein is Probable phosphatase VF_A0065 of Aliivibrio fischeri (strain ATCC 700601 / ES114) (Vibrio fischeri).